The following is a 374-amino-acid chain: Speckle-type POZ protein (374 aa).

One can recognise an MATH domain in the interval 31-161; that stretch reads KFSYMWTINN…DDKLTLFCEV (131 aa). The tract at residues 71-191 is required for nuclear localization; sequence VNPKGLDEES…PECRLADELG (121 aa). An important for binding substrate proteins region spans residues 123 to 133; the sequence is YRFVQGKDWGF. The BTB domain occupies 173–297; sequence QNTMNMVKVP…MCEDALCSNL (125 aa). Important for homodimerization stretches follow at residues 186–217 and 297–355; these read LADELGGLWENSRFTDCCLCVAGQEFQAHKAI and LSVE…AYRS.

The protein belongs to the Tdpoz family. In terms of assembly, interacts with GLI2 and GLI3. Homodimer and homooligomer. Heterodimer with SPOPL. Each dimer interacts with two CUL3 molecules. Part of cullin-RING-based BCR (BTB-CUL3-RBX1) E3 ubiquitin-protein ligase complexes that contain CUL3 and homodimeric SPOP, or the heterodimer formed by SPOP and SPOPL, plus a target protein, such as MACROH2A1, PDX1/IPF1, BMI1, BRMS1 and DAXX. Interacts with IRF1; this interaction mediates IRF1 proteasomal degradation. Interacts with HNF1A.

It localises to the nucleus. Its subcellular location is the nucleus speckle. It functions in the pathway protein modification; protein ubiquitination. Functionally, component of a cullin-RING-based BCR (BTB-CUL3-RBX1) E3 ubiquitin-protein ligase complex that mediates the ubiquitination of target proteins, leading most often to their proteasomal degradation. In complex with CUL3, involved in ubiquitination and proteasomal degradation of BRMS1, DAXX, PDX1/IPF1, GLI2 and GLI3. In complex with CUL3, involved in ubiquitination of MACROH2A1 and BMI1; this does not lead to their proteasomal degradation. Inhibits transcriptional activation of PDX1/IPF1 targets, such as insulin, by promoting PDX1/IPF1 degradation. The cullin-RING-based BCR (BTB-CUL3-RBX1) E3 ubiquitin-protein ligase complex containing homodimeric SPOP has higher ubiquitin ligase activity than the complex that contains the heterodimer formed by SPOP and SPOPL. Involved in the regulation of bromodomain and extra-terminal motif (BET) proteins BRD2, BRD3, BRD4 stability.Plays an essential role for proper translation, but not for their degradation, of critical DNA replication licensing factors CDT1 and CDC6, thereby participating in DNA synthesis and cell proliferation. Regulates interferon regulatory factor 1/IRF1 proteasomal turnover by targeting S/T-rich degrons in IRF1. Involved in ubiquitination of BRDT and promotes its degradation, thereby regulates histone removal in early condensing spermatids prior to histone-to-protamine exchange. This is Speckle-type POZ protein (SPOP) from Bos taurus (Bovine).